Consider the following 221-residue polypeptide: Ribosomal RNA small subunit methyltransferase Nep1 (221 aa).

S-adenosyl-L-methionine is bound by residues Gly174, Gly179, and 196–201 (LGEVAM).

It belongs to the class IV-like SAM-binding methyltransferase superfamily. RNA methyltransferase NEP1 family. As to quaternary structure, homodimer.

The enzyme catalyses a pseudouridine in rRNA + S-adenosyl-L-methionine = an N(1)-methylpseudouridine in rRNA + S-adenosyl-L-homocysteine + H(+). Functionally, methyltransferase involved in ribosomal biogenesis. Specifically catalyzes the N1-methylation of the pseudouridine corresponding to position 914 in M.jannaschii 16S rRNA. In Pyrobaculum arsenaticum (strain DSM 13514 / JCM 11321 / PZ6), this protein is Ribosomal RNA small subunit methyltransferase Nep1.